Reading from the N-terminus, the 64-residue chain is Large ribosomal subunit protein bL33 (64 aa).

Positions 16–25 (EARTSSEPRR) are enriched in basic and acidic residues. A disordered region spans residues 16–39 (EARTSSEPRRSNGISRYTTEKNKR).

Belongs to the bacterial ribosomal protein bL33 family.

This Prochlorococcus marinus (strain MIT 9515) protein is Large ribosomal subunit protein bL33.